Here is a 210-residue protein sequence, read N- to C-terminus: Ribosomal RNA large subunit methyltransferase E (210 aa).

S-adenosyl-L-methionine is bound by residues glycine 60, tryptophan 62, aspartate 85, aspartate 101, and aspartate 126. Residue lysine 166 is the Proton acceptor of the active site.

The protein belongs to the class I-like SAM-binding methyltransferase superfamily. RNA methyltransferase RlmE family.

The protein resides in the cytoplasm. The catalysed reaction is uridine(2552) in 23S rRNA + S-adenosyl-L-methionine = 2'-O-methyluridine(2552) in 23S rRNA + S-adenosyl-L-homocysteine + H(+). Its function is as follows. Specifically methylates the uridine in position 2552 of 23S rRNA at the 2'-O position of the ribose in the fully assembled 50S ribosomal subunit. The sequence is that of Ribosomal RNA large subunit methyltransferase E from Bordetella pertussis (strain Tohama I / ATCC BAA-589 / NCTC 13251).